Consider the following 369-residue polypeptide: Phenylalanine--tRNA ligase alpha subunit (369 aa).

Mg(2+) is bound at residue glutamate 269.

The protein belongs to the class-II aminoacyl-tRNA synthetase family. Phe-tRNA synthetase alpha subunit type 1 subfamily. In terms of assembly, tetramer of two alpha and two beta subunits. The cofactor is Mg(2+).

The protein resides in the cytoplasm. It catalyses the reaction tRNA(Phe) + L-phenylalanine + ATP = L-phenylalanyl-tRNA(Phe) + AMP + diphosphate + H(+). The protein is Phenylalanine--tRNA ligase alpha subunit of Brucella ovis (strain ATCC 25840 / 63/290 / NCTC 10512).